Consider the following 100-residue polypeptide: MIREERLLKVILAPHISEKSTVNAEKHNTVVFRVAIDATKAEIKAAVAKLFEVEVESVRTLVSKGKTKRTGGRTGRRSDWKKAYVTLAAGADIDFVGGAE.

The protein belongs to the universal ribosomal protein uL23 family. In terms of assembly, part of the 50S ribosomal subunit. Contacts protein L29, and trigger factor when it is bound to the ribosome.

In terms of biological role, one of the early assembly proteins it binds 23S rRNA. One of the proteins that surrounds the polypeptide exit tunnel on the outside of the ribosome. Forms the main docking site for trigger factor binding to the ribosome. In Shewanella oneidensis (strain ATCC 700550 / JCM 31522 / CIP 106686 / LMG 19005 / NCIMB 14063 / MR-1), this protein is Large ribosomal subunit protein uL23.